A 229-amino-acid chain; its full sequence is Cytochrome c oxidase subunit 2 (229 aa).

Residues 1-26 are Mitochondrial intermembrane-facing; sequence MATWAQLNFQDAASPMMEQLHYFHDH. Residues 27 to 48 traverse the membrane as a helical segment; that stretch reads TMMVLVIITIMVAYIMGTMFFN. Over 49-62 the chain is Mitochondrial matrix; that stretch reads KDVNRYLLDGQKIE. Residues 63–82 traverse the membrane as a helical segment; the sequence is TEWTIVPVFVLVIIAMPSLR. The Mitochondrial intermembrane portion of the chain corresponds to 83-229; sequence LLYLLDEVNE…INWIQNMSEA (147 aa). Cu cation contacts are provided by His161, Cys196, Glu198, Cys200, His204, and Met207. Glu198 lines the Mg(2+) pocket.

Belongs to the cytochrome c oxidase subunit 2 family. Component of the cytochrome c oxidase (complex IV, CIV), a multisubunit enzyme composed of a catalytic core of 3 subunits and several supernumerary subunits. The complex exists as a monomer or a dimer and forms supercomplexes (SCs) in the inner mitochondrial membrane with ubiquinol-cytochrome c oxidoreductase (cytochrome b-c1 complex, complex III, CIII). It depends on Cu cation as a cofactor.

It localises to the mitochondrion inner membrane. It catalyses the reaction 4 Fe(II)-[cytochrome c] + O2 + 8 H(+)(in) = 4 Fe(III)-[cytochrome c] + 2 H2O + 4 H(+)(out). Component of the cytochrome c oxidase, the last enzyme in the mitochondrial electron transport chain which drives oxidative phosphorylation. The respiratory chain contains 3 multisubunit complexes succinate dehydrogenase (complex II, CII), ubiquinol-cytochrome c oxidoreductase (cytochrome b-c1 complex, complex III, CIII) and cytochrome c oxidase (complex IV, CIV), that cooperate to transfer electrons derived from NADH and succinate to molecular oxygen, creating an electrochemical gradient over the inner membrane that drives transmembrane transport and the ATP synthase. Cytochrome c oxidase is the component of the respiratory chain that catalyzes the reduction of oxygen to water. Electrons originating from reduced cytochrome c in the intermembrane space (IMS) are transferred via the dinuclear copper A center (CU(A)) of subunit 2 and heme A of subunit 1 to the active site in subunit 1, a binuclear center (BNC) formed by heme A3 and copper B (CU(B)). The BNC reduces molecular oxygen to 2 water molecules using 4 electrons from cytochrome c in the IMS and 4 protons from the mitochondrial matrix. In Sympetrum striolatum (Common darter dragonfly), this protein is Cytochrome c oxidase subunit 2 (COII).